The following is a 256-amino-acid chain: ATP synthase peripheral stalk subunit b, mitochondrial (256 aa).

Residues 1–42 constitute a mitochondrion transit peptide; that stretch reads MLSRVVLSAAATAASSLKNAAFLGPGVLQATRTFHTGQPHLA. N6-succinyllysine is present on lysine 131. Lysine 139, lysine 154, lysine 162, lysine 221, lysine 233, and lysine 244 each carry N6-acetyllysine.

It belongs to the eukaryotic ATPase B chain family. In terms of assembly, component of the ATP synthase complex composed at least of ATP5F1A/subunit alpha, ATP5F1B/subunit beta, ATP5MC1/subunit c (homooctomer), MT-ATP6/subunit a, MT-ATP8/subunit 8, ATP5ME/subunit e, ATP5MF/subunit f, ATP5MG/subunit g, ATP5MK/subunit k, ATP5MJ/subunit j, ATP5F1C/subunit gamma, ATP5F1D/subunit delta, ATP5F1E/subunit epsilon, ATP5PF/subunit F6, ATP5PB/subunit b, ATP5PD/subunit d, ATP5PO/subunit OSCP. ATP synthase complex consists of a soluble F(1) head domain (subunits alpha(3) and beta(3)) - the catalytic core - and a membrane F(0) domain - the membrane proton channel (subunits c, a, 8, e, f, g, k and j). These two domains are linked by a central stalk (subunits gamma, delta, and epsilon) rotating inside the F1 region and a stationary peripheral stalk (subunits F6, b, d, and OSCP).

The protein resides in the mitochondrion. It localises to the mitochondrion inner membrane. In terms of biological role, subunit b, of the mitochondrial membrane ATP synthase complex (F(1)F(0) ATP synthase or Complex V) that produces ATP from ADP in the presence of a proton gradient across the membrane which is generated by electron transport complexes of the respiratory chain. ATP synthase complex consist of a soluble F(1) head domain - the catalytic core - and a membrane F(1) domain - the membrane proton channel. These two domains are linked by a central stalk rotating inside the F(1) region and a stationary peripheral stalk. During catalysis, ATP synthesis in the catalytic domain of F(1) is coupled via a rotary mechanism of the central stalk subunits to proton translocation. In vivo, can only synthesize ATP although its ATP hydrolase activity can be activated artificially in vitro. Part of the complex F(0) domain. Part of the complex F(0) domain and the peripheric stalk, which acts as a stator to hold the catalytic alpha(3)beta(3) subcomplex and subunit a/ATP6 static relative to the rotary elements. This chain is ATP synthase peripheral stalk subunit b, mitochondrial, found in Pongo abelii (Sumatran orangutan).